Reading from the N-terminus, the 251-residue chain is Protein FAM216A (251 aa).

A disordered region spans residues 1–41; that stretch reads MPSRWPGVAGPPALARTEGGEGSAGHSYPQNSKGTGEQHKA.

The protein belongs to the FAM216 family.

This Mus musculus (Mouse) protein is Protein FAM216A (Fam216a).